The sequence spans 282 residues: ATP synthase gamma chain (282 aa).

It belongs to the ATPase gamma chain family. F-type ATPases have 2 components, CF(1) - the catalytic core - and CF(0) - the membrane proton channel. CF(1) has five subunits: alpha(3), beta(3), gamma(1), delta(1), epsilon(1). CF(0) has three main subunits: a, b and c.

The protein localises to the cell membrane. Functionally, produces ATP from ADP in the presence of a proton gradient across the membrane. The gamma chain is believed to be important in regulating ATPase activity and the flow of protons through the CF(0) complex. This Clostridium botulinum (strain Kyoto / Type A2) protein is ATP synthase gamma chain.